The chain runs to 464 residues: MTAQDLSVHIARWLDSLPLQAGSKLVLAYSGGVDSEVLAYGLSEYAKQRPDLRYQLIYVHHGLSPNADNWAKHCQARAAIYGLPVTVERVQLILGPRVSVEAEARKARYQAILPHLNPQDILLTAHHEDDQLETILLALKRGQGPKGLAAMGQIQPLSLADKGSCLQVRPLLDISREMIETFAQTRQLVHIEDESNQDDKYDRNFLRLEIIPRLKARWPSIATTASRSAQLCAEQQAIVETEVSERLPKLLVKAPVTEQTVLKLSELAAQPIEWQGILLRGFIESQEFSLPSYVQLQQMLQQLIHAKEDAKVHIRINDCVLRRFAGMLYLDSGETLSTALHITARDLHQEILTLLTQASAMVEDKIVPFALVTTGPRLRLPKADEVVSLGYGLPGQFRCQPHFRDKGRELKKLWQECAVPPWLRAEVGFLFYNDKLVMAFGLWVEKAFCAQGDEIGLSYLIANP.

Position 30 to 35 (Ser30 to Ser35) interacts with ATP.

Belongs to the tRNA(Ile)-lysidine synthase family.

The protein resides in the cytoplasm. It catalyses the reaction cytidine(34) in tRNA(Ile2) + L-lysine + ATP = lysidine(34) in tRNA(Ile2) + AMP + diphosphate + H(+). Its function is as follows. Ligates lysine onto the cytidine present at position 34 of the AUA codon-specific tRNA(Ile) that contains the anticodon CAU, in an ATP-dependent manner. Cytidine is converted to lysidine, thus changing the amino acid specificity of the tRNA from methionine to isoleucine. The protein is tRNA(Ile)-lysidine synthase of Shewanella oneidensis (strain ATCC 700550 / JCM 31522 / CIP 106686 / LMG 19005 / NCIMB 14063 / MR-1).